Reading from the N-terminus, the 493-residue chain is Protein nucleotidyltransferase YdiU (493 aa).

Glycine 94, glycine 96, arginine 97, lysine 117, aspartate 129, glycine 130, arginine 180, and arginine 187 together coordinate ATP. Residue aspartate 256 is the Proton acceptor of the active site. Residues asparagine 257 and aspartate 266 each coordinate Mg(2+). Aspartate 266 contacts ATP.

The protein belongs to the SELO family. Mg(2+) is required as a cofactor. Mn(2+) serves as cofactor.

It carries out the reaction L-seryl-[protein] + ATP = 3-O-(5'-adenylyl)-L-seryl-[protein] + diphosphate. The enzyme catalyses L-threonyl-[protein] + ATP = 3-O-(5'-adenylyl)-L-threonyl-[protein] + diphosphate. It catalyses the reaction L-tyrosyl-[protein] + ATP = O-(5'-adenylyl)-L-tyrosyl-[protein] + diphosphate. The catalysed reaction is L-histidyl-[protein] + UTP = N(tele)-(5'-uridylyl)-L-histidyl-[protein] + diphosphate. It carries out the reaction L-seryl-[protein] + UTP = O-(5'-uridylyl)-L-seryl-[protein] + diphosphate. The enzyme catalyses L-tyrosyl-[protein] + UTP = O-(5'-uridylyl)-L-tyrosyl-[protein] + diphosphate. Functionally, nucleotidyltransferase involved in the post-translational modification of proteins. It can catalyze the addition of adenosine monophosphate (AMP) or uridine monophosphate (UMP) to a protein, resulting in modifications known as AMPylation and UMPylation. This is Protein nucleotidyltransferase YdiU from Hahella chejuensis (strain KCTC 2396).